The sequence spans 24 residues: Brevinin-1Ecb (24 aa).

C18 and C24 form a disulfide bridge.

Expressed by the skin glands.

The protein resides in the secreted. Functionally, shows antibacterial activity against representative Gram-negative and Gram-positive bacterial species, and hemolytic activity. The chain is Brevinin-1Ecb from Pelophylax ridibundus (Marsh frog).